The chain runs to 493 residues: 3-octaprenyl-4-hydroxybenzoate carboxy-lyase (493 aa).

Asn172 contributes to the Mn(2+) binding site. Residues 175-177 (IYR), 189-191 (RWL), and 194-195 (RG) each bind prenylated FMN. Glu238 is a binding site for Mn(2+). Residue Asp287 is the Proton donor of the active site.

The protein belongs to the UbiD family. Homohexamer. Requires prenylated FMN as cofactor. Mn(2+) serves as cofactor.

The protein resides in the cell membrane. It carries out the reaction a 4-hydroxy-3-(all-trans-polyprenyl)benzoate + H(+) = a 2-(all-trans-polyprenyl)phenol + CO2. It functions in the pathway cofactor biosynthesis; ubiquinone biosynthesis. Its function is as follows. Catalyzes the decarboxylation of 3-octaprenyl-4-hydroxy benzoate to 2-octaprenylphenol, an intermediate step in ubiquinone biosynthesis. In Shewanella piezotolerans (strain WP3 / JCM 13877), this protein is 3-octaprenyl-4-hydroxybenzoate carboxy-lyase.